The primary structure comprises 77 residues: uncharacterized protein (77 aa).

2 stretches are compositionally biased toward basic and acidic residues: residues 1–24 and 37–58; these read CPVAEEHFLVPAHEARGTQGEDQR and EGPKLGEERPKPEAGALEERGP. Residues 1 to 77 are disordered; it reads CPVAEEHFLV…RHGPKRKPAK (77 aa). Over residues 66 to 77 the composition is skewed to basic residues; the sequence is RPRHGPKRKPAK.

This is an uncharacterized protein from Macaca fascicularis (Crab-eating macaque).